The chain runs to 401 residues: Chorismate synthase (401 aa).

Residues Arg-40 and Arg-46 each contribute to the NADP(+) site. Residues 135-137 (RAS), 256-257 (QA), Gly-300, 315-319 (KPIST), and Arg-341 each bind FMN.

This sequence belongs to the chorismate synthase family. In terms of assembly, homotetramer. It depends on FMNH2 as a cofactor.

The catalysed reaction is 5-O-(1-carboxyvinyl)-3-phosphoshikimate = chorismate + phosphate. It functions in the pathway metabolic intermediate biosynthesis; chorismate biosynthesis; chorismate from D-erythrose 4-phosphate and phosphoenolpyruvate: step 7/7. Functionally, catalyzes the anti-1,4-elimination of the C-3 phosphate and the C-6 proR hydrogen from 5-enolpyruvylshikimate-3-phosphate (EPSP) to yield chorismate, which is the branch point compound that serves as the starting substrate for the three terminal pathways of aromatic amino acid biosynthesis. This reaction introduces a second double bond into the aromatic ring system. The chain is Chorismate synthase from Mycobacterium bovis (strain BCG / Pasteur 1173P2).